Consider the following 172-residue polypeptide: MIKKDEVFKIGIFNKPHGVKGEISFTFTDDIFDRVECEYLVCLLDGIFVPFFIEEYRFRSDTTALVKLEGVDTSEKARMFTNVEVYFPKKYVGEEEDSDDIPTWNYFIGFKVEDVNHGELGEIVAVDDSTMNVLFAIEKGGEELLLPAHEEFITKLDKKKRLLTVEVPDGLI.

The PRC barrel domain occupies 99–171; sequence DDIPTWNYFI…LLTVEVPDGL (73 aa).

The protein belongs to the RimM family. In terms of assembly, binds ribosomal protein uS19.

It is found in the cytoplasm. An accessory protein needed during the final step in the assembly of 30S ribosomal subunit, possibly for assembly of the head region. Essential for efficient processing of 16S rRNA. May be needed both before and after RbfA during the maturation of 16S rRNA. It has affinity for free ribosomal 30S subunits but not for 70S ribosomes. The protein is Ribosome maturation factor RimM of Phocaeicola vulgatus (strain ATCC 8482 / DSM 1447 / JCM 5826 / CCUG 4940 / NBRC 14291 / NCTC 11154) (Bacteroides vulgatus).